A 674-amino-acid polypeptide reads, in one-letter code: Glutaminase kidney isoform, mitochondrial (674 aa).

The N-terminal 54 residues, 1–54 (MMRLRGSAMLRELLLRPPAAVGAVLRRAQPLGTLCRRPRGGSRPTAGLVAAARL), are a transit peptide targeting the mitochondrion. The segment at 56-123 (PWWGGGGRAK…PGETDAFGNS (68 aa)) is disordered. The span at 58-71 (WGGGGRAKGPGAGG) shows a compositional bias: gly residues. The segment covering 89–101 (PPQQQQQQQQQPG) has biased composition (low complexity). Residues Lys135 and Lys169 each carry the N6-succinyllysine modification. Position 291 (Ser291) interacts with substrate. Lys316 is modified (N6-acetyllysine). The highly mobile activation loop stretch occupies residues 320–327 (GLRFNKLF). The substrate site is built by Asn340, Glu386, Asn393, Tyr419, Tyr471, and Val489. ANK repeat units lie at residues 590 to 619 (DSRTALHVAAAEGHVEVVKFLLEACKVNPF) and 624 to 653 (WNNTPMDEALHFGHHDVFKILQEYQVQYTP). Residues 652 to 674 (TPQGDSDDGKGNQTVHKNLDGLL) form a disordered region. Residue Ser657 is modified to Phosphoserine.

Belongs to the glutaminase family. In terms of assembly, homotetramer, dimer of dimers. The tetramers can assemble into rod-like oligomers (in vitro), but the physiological significance of this is not clear. Interacts with RAF1 and MAP2K2. Interacts with ATCAY; the interaction is direct and may control GLS localization, negatively regulating its activity. In terms of processing, synthesized as a 74-kDa cytosolic precursor which is proteolytically processed by the mitochondrial-processing peptidase (MPP) via a 72-kDa intermediate to yield the mature mitochondrial 68- and 65-kDa subunits.

Its subcellular location is the mitochondrion. It is found in the cytoplasm. It localises to the cytosol. The protein resides in the mitochondrion matrix. It catalyses the reaction L-glutamine + H2O = L-glutamate + NH4(+). Its activity is regulated as follows. Isoform 1 and isoform 2 are activated by phosphate, due to increased affinity for glutamine. At phosphate concentrations above 10 mM, isoform 2 is more efficient than isoform 1. In terms of biological role, catalyzes the first reaction in the primary pathway for the renal catabolism of glutamine. Plays a role in maintaining acid-base homeostasis. Regulates the levels of the neurotransmitter glutamate, the main excitatory neurotransmitter in the brain. The chain is Glutaminase kidney isoform, mitochondrial (Gls) from Mus musculus (Mouse).